Consider the following 397-residue polypeptide: Cystinosin (397 aa).

The signal sequence occupies residues methionine 1–alanine 24. Over glutamine 25–arginine 126 the chain is Lumenal. Asparagine 43 and asparagine 86 each carry an N-linked (GlcNAc...) asparagine glycan. The helical transmembrane segment at alanine 127 to phenylalanine 147 threads the bilayer. A PQ-loop 1 domain is found at serine 132–phenylalanine 187. Over tyrosine 148–phenylalanine 167 the chain is Cytoplasmic. Residues leucine 168–isoleucine 188 form a helical membrane-spanning segment. Over glutamate 189–aspartate 210 the chain is Lumenal. A helical transmembrane segment spans residues valine 211–tyrosine 231. Over glutamine 232–serine 239 the chain is Cytoplasmic. The helical transmembrane segment at phenylalanine 240 to alanine 260 threads the bilayer. The Lumenal portion of the chain corresponds to glycine 261 to serine 263. Residues valine 264 to isoleucine 284 traverse the membrane as a helical segment. Residues leucine 271–asparagine 327 enclose the PQ-loop 2 domain. Residues lysine 285 to tryptophan 302 lie on the Cytoplasmic side of the membrane. The helical transmembrane segment at serine 303–leucine 323 threads the bilayer. Topologically, residues asparagine 324–lysine 340 are lumenal. Residues phenylalanine 341–phenylalanine 361 traverse the membrane as a helical segment. Topologically, residues tyrosine 362–tyrosine 397 are cytoplasmic. The segment covering leucine 373–glutamate 385 has biased composition (polar residues). The interval leucine 373–tyrosine 397 is disordered.

It belongs to the cystinosin family.

It is found in the lysosome membrane. The enzyme catalyses L-cystine(out) + H(+)(out) = L-cystine(in) + H(+)(in). Functionally, cystine/H(+) symporter that mediates export of cystine, the oxidized dimer of cysteine, from lysosomes. Involved in cysteine homeostasis during periods of fasting, which indirectly regulates mTORC1-mediated signaling by supporting de novo CoA synthesis, the TCA cycle and amino acid metabolism during periods of food shortage. Important for maintaining autophagy, and for development and survival during periods of fasting. This is Cystinosin from Drosophila melanogaster (Fruit fly).